Here is a 118-residue protein sequence, read N- to C-terminus: uncharacterized protein (118 aa).

Residues 49 to 80 (SKEEHTTSAANLHPRKKKRMPPRRAEKNKAPN) are disordered. A compositionally biased stretch (basic residues) spans 61–70 (HPRKKKRMPP).

This is an uncharacterized protein from Saccharomyces cerevisiae (strain ATCC 204508 / S288c) (Baker's yeast).